The following is a 232-amino-acid chain: Ornithine carbamoyltransferase (232 aa).

Carbamoyl phosphate is bound by residues glutamine 15, arginine 39, and 66–69 (HPTQ). Residues asparagine 99, aspartate 163, and 167–168 (SM) contribute to the L-ornithine site. Residues 204–207 (HCLP) and threonine 232 contribute to the carbamoyl phosphate site.

It belongs to the aspartate/ornithine carbamoyltransferase superfamily. OTCase family.

It localises to the cytoplasm. The enzyme catalyses carbamoyl phosphate + L-ornithine = L-citrulline + phosphate + H(+). It functions in the pathway amino-acid biosynthesis; L-arginine biosynthesis; L-arginine from L-ornithine and carbamoyl phosphate: step 1/3. Its function is as follows. Reversibly catalyzes the transfer of the carbamoyl group from carbamoyl phosphate (CP) to the N(epsilon) atom of ornithine (ORN) to produce L-citrulline. The sequence is that of Ornithine carbamoyltransferase (argF) from Neisseria perflava.